The primary structure comprises 426 residues: Putative phosphate permease TC_0064 (426 aa).

A run of 11 helical transmembrane segments spans residues 1-21 (MWWL…NIGA), 37-57 (LTLR…AVVL), 83-103 (VFGM…ASFF), 104-124 (GWPV…GIIL), 140-160 (VSWL…FSFI), 183-203 (AIII…ARVV), 207-227 (VAFR…IWGV), 260-280 (LVVE…MSFA), 309-329 (VLFI…ATWG), 365-385 (FGFP…VGLA), and 399-419 (IVLS…MFFL).

It belongs to the inorganic phosphate transporter (PiT) (TC 2.A.20) family.

The protein localises to the cell membrane. In terms of biological role, potential transporter for phosphate. This is Putative phosphate permease TC_0064 from Chlamydia muridarum (strain MoPn / Nigg).